The following is a 1088-amino-acid chain: V-type proton ATPase catalytic subunit A (1088 aa).

257-264 (GAFGCGKT) serves as a coordination point for ATP. The region spanning 485–662 (LLGTWAGIGN…LVKIAHSLGI (178 aa)) is the DOD-type homing endonuclease domain.

The protein belongs to the ATPase alpha/beta chains family. In terms of assembly, V-ATPase is a heteromultimeric enzyme composed of a peripheral catalytic V1 complex (components A to H) attached to an integral membrane V0 proton pore complex (components: a, c, c', c'', d, e, f and VOA1). This protein undergoes a protein self splicing that involves a post-translational excision of the VDE intervening region (intein) followed by peptide ligation.

Its subcellular location is the vacuole membrane. The catalysed reaction is ATP + H2O + 4 H(+)(in) = ADP + phosphate + 5 H(+)(out). Catalytic subunit of the V1 complex of vacuolar(H+)-ATPase (V-ATPase), a multisubunit enzyme composed of a peripheral complex (V1) that hydrolyzes ATP and a membrane integral complex (V0) that translocates protons. V-ATPase is responsible for acidifying and maintaining the pH of intracellular compartments. Its function is as follows. VDE is an endonuclease that can cleave at a site present in a VMA1 allele that lacks the derived endonuclease segment of the open reading frame; cleavage at this site only occurs during meiosis and initiates 'homing', a genetic event that converts a VMA1 allele lacking VDE into one that contains it. This chain is V-type proton ATPase catalytic subunit A (VMA1), found in Candida tropicalis (Yeast).